Here is a 503-residue protein sequence, read N- to C-terminus: MIKKTDLNNNIFQKEKQIRKEKLINMKKNGFSFPNSFKKNTNSIKIHQEYENKTINELKVLNVEVTIAGRMIQRRIMGKASFFTLQDMEGKIQIYTREKEITSDFYNNHFKKWDIGDILGIEGILFKTKTGELSIFSKKLKILTKSLRPLPDKFHGLSNQEKRYRKRYLDLISNNQLFNIFKNRSKIIRFIRNFMIENNFLEVETPMLHNIPGGANARPFITYHNEINEEMYLRIAPELYLKQLIVGGFERIFELNRNFRNEGVSARHNPEFTMMEAYIAYSNYEDMMNFTENLLKNIIKSICGKSEIKYNKYYLNFNIPFKKLTMKESILQFNSNICLSDLKNLQKIKKIANNIGIEIKDNWNIGYIENEIFEKTVEKNLIQPTFITEYPVEVSPLARRNDFNSNVTDRFELFIAGYEIGNGFSELNDSEDQKNRFLNQMKIAEKEKNKDMLYDENYIEALKYGLPPTSGLGIGIDRLIMILTNQISIRDVILFPTLRSFKK.

The Mg(2+) site is built by Glu-412 and Glu-419.

Belongs to the class-II aminoacyl-tRNA synthetase family. Homodimer. The cofactor is Mg(2+).

The protein localises to the cytoplasm. The enzyme catalyses tRNA(Lys) + L-lysine + ATP = L-lysyl-tRNA(Lys) + AMP + diphosphate. This Buchnera aphidicola subsp. Schizaphis graminum (strain Sg) protein is Lysine--tRNA ligase.